The primary structure comprises 415 residues: Gamma-glutamyl phosphate reductase (415 aa).

The protein belongs to the gamma-glutamyl phosphate reductase family.

It is found in the cytoplasm. It carries out the reaction L-glutamate 5-semialdehyde + phosphate + NADP(+) = L-glutamyl 5-phosphate + NADPH + H(+). It participates in amino-acid biosynthesis; L-proline biosynthesis; L-glutamate 5-semialdehyde from L-glutamate: step 2/2. Catalyzes the NADPH-dependent reduction of L-glutamate 5-phosphate into L-glutamate 5-semialdehyde and phosphate. The product spontaneously undergoes cyclization to form 1-pyrroline-5-carboxylate. The polypeptide is Gamma-glutamyl phosphate reductase (Thermotoga maritima (strain ATCC 43589 / DSM 3109 / JCM 10099 / NBRC 100826 / MSB8)).